We begin with the raw amino-acid sequence, 245 residues long: tRNA pseudouridine synthase A 1 (245 aa).

Residue aspartate 53 is the Nucleophile of the active site. Tyrosine 111 serves as a coordination point for substrate.

It belongs to the tRNA pseudouridine synthase TruA family. As to quaternary structure, homodimer.

The enzyme catalyses uridine(38/39/40) in tRNA = pseudouridine(38/39/40) in tRNA. Its function is as follows. Formation of pseudouridine at positions 38, 39 and 40 in the anticodon stem and loop of transfer RNAs. The chain is tRNA pseudouridine synthase A 1 from Clostridium tetani (strain Massachusetts / E88).